Here is a 1025-residue protein sequence, read N- to C-terminus: Error-prone DNA polymerase (1025 aa).

It belongs to the DNA polymerase type-C family. DnaE2 subfamily.

The protein localises to the cytoplasm. It catalyses the reaction DNA(n) + a 2'-deoxyribonucleoside 5'-triphosphate = DNA(n+1) + diphosphate. Functionally, DNA polymerase involved in damage-induced mutagenesis and translesion synthesis (TLS). It is not the major replicative DNA polymerase. This Pseudomonas fluorescens (strain Pf0-1) protein is Error-prone DNA polymerase.